The sequence spans 378 residues: uncharacterized protein (378 aa).

Residues methionine 1–lysine 11 are compositionally biased toward polar residues. Residues methionine 1–proline 33 are disordered.

It to B.subtilis YxjH.

This is an uncharacterized protein from Bacillus subtilis (strain 168).